Reading from the N-terminus, the 265-residue chain is Small ribosomal subunit protein eS1 (265 aa).

Disordered stretches follow at residues 1–24 (MTQG…RTID) and 240–265 (HEKK…LLAQ). Basic and acidic residues predominate over residues 240–253 (HEKKGEKATGRDGA).

Belongs to the eukaryotic ribosomal protein eS1 family. Component of the small ribosomal subunit. Mature ribosomes consist of a small (40S) and a large (60S) subunit. The 40S subunit contains about 33 different proteins and 1 molecule of RNA (18S). The 60S subunit contains about 49 different proteins and 3 molecules of RNA (25S, 5.8S and 5S).

It localises to the cytoplasm. The protein is Small ribosomal subunit protein eS1 of Tetrahymena thermophila (strain SB210).